A 504-amino-acid polypeptide reads, in one-letter code: Maturase K (504 aa).

Belongs to the intron maturase 2 family. MatK subfamily.

It localises to the plastid. Its subcellular location is the chloroplast. Its function is as follows. Usually encoded in the trnK tRNA gene intron. Probably assists in splicing its own and other chloroplast group II introns. In Erythrina crista-galli (Cockspur coral tree), this protein is Maturase K.